The sequence spans 434 residues: Sulfide-quinone reductase (434 aa).

FAD-binding positions include Gly8–Gly12, Ser34–Ala35, and Ser77–Ala78. The Cysteine persulfide intermediate role is filled by Cys160. Residues Ile302 and Gly322 each contribute to the FAD site. Catalysis depends on Cys356, which acts as the Cysteine persulfide intermediate. Lys391 contributes to the FAD binding site.

The protein belongs to the SQRD family. As to quaternary structure, homodimer. FAD serves as cofactor.

It localises to the membrane. The catalysed reaction is n a quinone + n hydrogen sulfide + n H(+) = polysulfur(n-2) + n a quinol. Functionally, catalyzes the oxidation of hydrogen sulfide, with the help of a quinone. Consecutive reaction cycles lead to the accumulation of a polysulfide product on the active site Cys residues; these products are released when they exceed a critical length, typically as cyclooctasulfur. The polypeptide is Sulfide-quinone reductase (Acidithiobacillus ferrooxidans (strain ATCC 23270 / DSM 14882 / CIP 104768 / NCIMB 8455) (Ferrobacillus ferrooxidans (strain ATCC 23270))).